Reading from the N-terminus, the 107-residue chain is Large ribosomal subunit protein bL21 (107 aa).

It belongs to the bacterial ribosomal protein bL21 family. In terms of assembly, part of the 50S ribosomal subunit. Contacts protein L20.

Its function is as follows. This protein binds to 23S rRNA in the presence of protein L20. This is Large ribosomal subunit protein bL21 from Chlamydia muridarum (strain MoPn / Nigg).